A 245-amino-acid chain; its full sequence is 1-(5-phosphoribosyl)-5-[(5-phosphoribosylamino)methylideneamino] imidazole-4-carboxamide isomerase (245 aa).

The active-site Proton acceptor is Asp7. Residue Asp129 is the Proton donor of the active site.

Belongs to the HisA/HisF family.

The protein resides in the cytoplasm. It carries out the reaction 1-(5-phospho-beta-D-ribosyl)-5-[(5-phospho-beta-D-ribosylamino)methylideneamino]imidazole-4-carboxamide = 5-[(5-phospho-1-deoxy-D-ribulos-1-ylimino)methylamino]-1-(5-phospho-beta-D-ribosyl)imidazole-4-carboxamide. Its pathway is amino-acid biosynthesis; L-histidine biosynthesis; L-histidine from 5-phospho-alpha-D-ribose 1-diphosphate: step 4/9. The protein is 1-(5-phosphoribosyl)-5-[(5-phosphoribosylamino)methylideneamino] imidazole-4-carboxamide isomerase of Shewanella baltica (strain OS223).